We begin with the raw amino-acid sequence, 274 residues long: Mitochondrial outer membrane protein porin 4 (274 aa).

G2 is subject to N-acetylglycine. Position 76 is a phosphoserine (S76).

Belongs to the eukaryotic mitochondrial porin (TC 1.B.8.1) family. In terms of tissue distribution, widely expressed.

The protein resides in the cell membrane. The protein localises to the mitochondrion outer membrane. Forms a channel through the mitochondrial outer membrane that allows diffusion of small hydrophilic molecules. The channel adopts an open conformation at low or zero membrane potential and a closed conformation at potentials above 30-40 mV. The open state has a weak anion selectivity whereas the closed state is cation-selective. Involved in plant growth and development at the vegetative and reproductive stages. Is important for leaf and pollen development and mitochondrial membrane potential steady state. May be involved in disease resistance. This is Mitochondrial outer membrane protein porin 4 (VDAC4) from Arabidopsis thaliana (Mouse-ear cress).